We begin with the raw amino-acid sequence, 1320 residues long: Protein brunelleschi (1320 aa).

Residues 313–411 (HRNSSLQEAG…IPGHQRNGDL (99 aa)) are disordered. The span at 314 to 327 (RNSSLQEAGTSPLK) shows a compositional bias: polar residues. Ser-317 is modified (phosphoserine). Phosphothreonine is present on Thr-329. A compositionally biased stretch (basic and acidic residues) spans 329–340 (TPEKWRASDATK). Residues 345-361 (SDATANNVDSNQPQQRV) show a composition bias toward polar residues. A compositionally biased stretch (low complexity) spans 362–400 (TSNSSSCSSVSSLVTTATNSSASDTPTTSSSSTSTISAA). Ser-672 carries the phosphoserine modification. The tract at residues 923 to 954 (VSTSGHASLPSRVGSPHHRRNEPQNSSFRSTI) is disordered. Residues 945–954 (PQNSSFRSTI) are compositionally biased toward polar residues.

Belongs to the NIBP family. As to quaternary structure, may be part of the multisubunit TRAPP (transport protein particle) complex.

The protein localises to the cytoplasm. It is found in the golgi apparatus. Functionally, cooperates with Rab11 and fwd/PI4K to mediate the flow of membrane through the Golgi, which is required to support cleavage furrow ingression, therefore promoting cytokinesis in male meiotic cells. This chain is Protein brunelleschi, found in Drosophila melanogaster (Fruit fly).